Reading from the N-terminus, the 219-residue chain is Large ribosomal subunit protein uL16 (219 aa).

It belongs to the universal ribosomal protein uL16 family. As to quaternary structure, component of the small ribosomal subunit. Mature ribosomes consist of a small (40S) and a large (60S) subunit. The 40S subunit contains about 33 different proteins and 1 molecule of RNA (18S). The 60S subunit contains about 49 different proteins and 3 molecules of RNA (25S, 5.8S and 5S).

The sequence is that of Large ribosomal subunit protein uL16 (RPL10) from Solanum melongena (Eggplant).